We begin with the raw amino-acid sequence, 440 residues long: Chromosomal replication initiator protein DnaA (440 aa).

A domain I, interacts with DnaA modulators region spans residues 1-74 (MNPSQILENL…VQSGNKAIIN (74 aa)). The tract at residues 74–99 (NIQAQSAKQSNKSTKIDIAHIKAQST) is domain II. Residues 100–316 (ILNPSFTFDS…GIIISLNAYA (217 aa)) form a domain III, AAA+ region region. 4 residues coordinate ATP: Gly-146, Gly-148, Lys-149, and Thr-150. Positions 317-440 (TILGQEITLE…KNKILVKSQS (124 aa)) are domain IV, binds dsDNA.

It belongs to the DnaA family. As to quaternary structure, oligomerizes as a right-handed, spiral filament on DNA at oriC.

Its subcellular location is the cytoplasm. Functionally, plays an essential role in the initiation and regulation of chromosomal replication. ATP-DnaA binds to the origin of replication (oriC) to initiate formation of the DNA replication initiation complex once per cell cycle. Binds the DnaA box (a 9 base pair repeat at the origin) and separates the double-stranded (ds)DNA. Forms a right-handed helical filament on oriC DNA; dsDNA binds to the exterior of the filament while single-stranded (ss)DNA is stabiized in the filament's interior. The ATP-DnaA-oriC complex binds and stabilizes one strand of the AT-rich DNA unwinding element (DUE), permitting loading of DNA polymerase. After initiation quickly degrades to an ADP-DnaA complex that is not apt for DNA replication. Binds acidic phospholipids. The protein is Chromosomal replication initiator protein DnaA of Campylobacter jejuni (strain RM1221).